Reading from the N-terminus, the 156-residue chain is MRSSAKQEELVRAFKALLKEEKFSSQGEIVLALQDQGFENINQSKVSRMLTKFGAVRTRNAKMEMVYCLPAELGVPTTSSPLKNLVLDIDYNDAVVVIHTSPGAAQLIARLLDSLGKAEGILGTIAGDDTIFTMPASGFSVRDLYEAILELFEQEL.

Belongs to the ArgR family.

The protein resides in the cytoplasm. It participates in amino-acid biosynthesis; L-arginine biosynthesis [regulation]. Regulates arginine biosynthesis genes. The sequence is that of Arginine repressor from Salmonella paratyphi C (strain RKS4594).